A 543-amino-acid polypeptide reads, in one-letter code: Putative inorganic phosphate export protein YjbB (543 aa).

9 helical membrane-spanning segments follow: residues 1 to 21 (MLTLLHLLSAVALLVWGTHIV), 48 to 68 (FCAGIGVTALVQSSNATTMLV), 76 to 96 (LVALAPALVIVLGADVGTALM), 99 to 119 (ILTFDLSWLSPLLIFIGVIFF), 134 to 154 (GIGLGLILLALELIVQAVTPI), 175 to 195 (ALIGAMFAIISYSSLAAVLLT), 196 to 216 (ATLTAAGIISFPVALCLVIGA), 240 to 260 (LGSLLFKLVGSLIILPFVHLL), and 274 to 294 (LVIYFHVFYNLVRCLVMLPFV).

Belongs to the YjbB family.

It localises to the cell inner membrane. It catalyses the reaction phosphate(in) = phosphate(out). Its function is as follows. Might be involved in phosphate export. Overproduction of YjbB reduces the elevated levels of polyphosphate (polyP) in a phoU mutant that accumulates 1000-fold higher levels of polyP than the wild type, suggesting that YjbB exports excess intracellular phosphate (Pi) in the phoU mutant and thus reduces the levels of polyP. In Escherichia coli (strain K12), this protein is Putative inorganic phosphate export protein YjbB (yjbB).